We begin with the raw amino-acid sequence, 96 residues long: Large ribosomal subunit protein bL21 (96 aa).

Belongs to the bacterial ribosomal protein bL21 family. Part of the 50S ribosomal subunit. Contacts protein L20.

This protein binds to 23S rRNA in the presence of protein L20. The chain is Large ribosomal subunit protein bL21 from Hydrogenobaculum sp. (strain Y04AAS1).